The following is a 382-amino-acid chain: Alkanesulfonate monooxygenase (382 aa).

The protein belongs to the SsuD family. Homotetramer.

The enzyme catalyses an alkanesulfonate + FMNH2 + O2 = an aldehyde + FMN + sulfite + H2O + 2 H(+). In terms of biological role, catalyzes the desulfonation of aliphatic sulfonates. This is Alkanesulfonate monooxygenase from Serratia proteamaculans (strain 568).